Reading from the N-terminus, the 711-residue chain is DNA topoisomerase 3 (711 aa).

The 134-residue stretch at 2-135 folds into the Toprim domain; the sequence is KSLILAEKPS…IRRLWISSVT (134 aa). Mg(2+)-binding residues include glutamate 8 and aspartate 104. The 429-residue stretch at 152–580 folds into the Topo IA-type catalytic domain; that stretch reads YNDLYYAALA…EMKDFTKDVV (429 aa). Residues 186-191 form an interaction with DNA region; the sequence is SLGRVQ. The active-site O-(5'-phospho-DNA)-tyrosine intermediate is tyrosine 305. Positions 691–711 are disordered; that stretch reads MNKNEGLDNNPFKDALKNLNL.

The protein belongs to the type IA topoisomerase family. The cofactor is Mg(2+).

The catalysed reaction is ATP-independent breakage of single-stranded DNA, followed by passage and rejoining.. Releases the supercoiling and torsional tension of DNA, which is introduced during the DNA replication and transcription, by transiently cleaving and rejoining one strand of the DNA duplex. Introduces a single-strand break via transesterification at a target site in duplex DNA. The scissile phosphodiester is attacked by the catalytic tyrosine of the enzyme, resulting in the formation of a DNA-(5'-phosphotyrosyl)-enzyme intermediate and the expulsion of a 3'-OH DNA strand. The free DNA strand then undergoes passage around the unbroken strand, thus removing DNA supercoils. Finally, in the religation step, the DNA 3'-OH attacks the covalent intermediate to expel the active-site tyrosine and restore the DNA phosphodiester backbone. This Staphylococcus aureus (strain NCTC 8325 / PS 47) protein is DNA topoisomerase 3.